The primary structure comprises 484 residues: Ribosome biogenesis protein NOP53 (484 aa).

2 disordered regions span residues 1-51 (MAAG…WRRL) and 304-356 (ESDG…AARK). A2 bears the N-acetylalanine mark. S29 bears the Phosphoserine mark. Over residues 35-49 (RRRRRGPRNKKRGWR) the composition is skewed to basic residues. Positions 148 to 437 (KEELWEKLAK…SELSGSLRTL (290 aa)) are mediates interaction with CDKN2A/isoform tumor suppressor ARF. S305 is subject to Phosphoserine. The segment covering 336-348 (PEKRMEKKTEQQR) has biased composition (basic and acidic residues). Residues 348-392 (RRREKAARKLRVQQAALRAARLQHQELFRLRGIKAQVARRLAELA) are mediates interaction with human herpesvirus 8 protein ORF16. Nucleolar localization signal stretches follow at residues 353 to 401 (AARK…RRIR) and 402 to 484 (RLAE…EIQL).

This sequence belongs to the NOP53 family. In terms of assembly, homooligomer. Interacts with PTEN; regulates PTEN phosphorylation and increases its stability. Interacts with RPL11; retains RPL11 into the nucleolus. Interacts with CDKN2A/isoform tumor suppressor ARF; the interaction is direct and promotes ARF nucleoplasmic relocalization and ubiquitin-mediated proteasomal degradation. Interacts with NPM1; the interaction is direct and competitive with MYC. Interacts with NF2 (via FERM domain); the interaction is direct. Interacts with p53/TP53 (via the oligomerization region); the interaction is direct and may prevent the MDM2-mediated proteasomal degradation of p53/TP53. Interacts with RIGI; may regulate RIGI through USP15-mediated 'Lys-63'-linked deubiquitination. Interacts with UBTF. Ubiquitin-mediated proteasomal degradation is regulated by c-JUN. It is associated with relocalization to the nucleoplasm and decreased homooligomerization. Post-translationally, phosphorylated upon DNA damage probably by ATM and DNA-PK; may regulate NOP53 degradation.

Its subcellular location is the nucleus. It is found in the nucleolus. The protein localises to the nucleoplasm. In terms of biological role, nucleolar protein which is involved in the integration of the 5S RNP into the ribosomal large subunit during ribosome biogenesis. In ribosome biogenesis, may also play a role in rRNA transcription. Also functions as a nucleolar sensor that regulates the activation of p53/TP53 in response to ribosome biogenesis perturbation, DNA damage and other stress conditions. DNA damage or perturbation of ribosome biogenesis disrupt the interaction between NOP53 and RPL11 allowing RPL11 transport to the nucleoplasm where it can inhibit MDM2 and allow p53/TP53 activation. It may also positively regulate the function of p53/TP53 in cell cycle arrest and apoptosis through direct interaction, preventing its MDM2-dependent ubiquitin-mediated proteasomal degradation. Originally identified as a tumor suppressor, it may also play a role in cell proliferation and apoptosis by positively regulating the stability of PTEN, thereby antagonizing the PI3K-AKT/PKB signaling pathway. May also inhibit cell proliferation and increase apoptosis through its interaction with NF2. May negatively regulate NPM1 by regulating its nucleoplasmic localization, oligomerization and ubiquitin-mediated proteasomal degradation. Thereby, may prevent NPM1 interaction with MYC and negatively regulate transcription mediated by the MYC-NPM1 complex. May also regulate cellular aerobic respiration. In the cellular response to viral infection, may play a role in the attenuation of interferon-beta through the inhibition of RIGI. This chain is Ribosome biogenesis protein NOP53, found in Mus musculus (Mouse).